The sequence spans 371 residues: Dead end protein homolog 1 (371 aa).

2 RRM domains span residues 85-163 (PQDI…ALDG) and 165-245 (PGNF…KLRS).

It is found in the nucleus. The protein localises to the cytoplasm. Functionally, RNA-binding factor that positively regulates gene expression by prohibiting miRNA-mediated gene suppression. Relieves miRNA repression in germline cells. Prohibits the function of several miRNAs by blocking the accessibility of target mRNAs. Sequence-specific RNA-binding factor that binds to U-rich regions (URRs) in the 3'untranslated region (3'-UTR) of several mRNAs. Does not bind to miRNAs. May play a role during early embryonic survival. In Xenopus laevis (African clawed frog), this protein is Dead end protein homolog 1 (dnd1).